The chain runs to 496 residues: Probable E3 ubiquitin-protein ligase XBOS32 (496 aa).

5 ANK repeats span residues 50-79, 83-112, 117-147, 180-209, and 223-252; these read GRNSPLHYAAAQGHHEIVSLLLESGVEINL, RGQTALMQACQYGHWEVVQTLMLFNANVHR, NGGSALHFAALHGHARCLRLVLADYVPSMPN, GGLTPLHMAALNGHVECVQLLLDLGASVIE, and AGSTPLHYAACGGNAVCCQLLIARGASLSA. The segment at 321–368 adopts an RING-type zinc-finger fold; that stretch reads CAVCLEGSCSVAAEGCKHEFCTRCALYLCSTSYTSVSPAGAIPCPLCR.

The catalysed reaction is S-ubiquitinyl-[E2 ubiquitin-conjugating enzyme]-L-cysteine + [acceptor protein]-L-lysine = [E2 ubiquitin-conjugating enzyme]-L-cysteine + N(6)-ubiquitinyl-[acceptor protein]-L-lysine.. It participates in protein modification; protein ubiquitination. The polypeptide is Probable E3 ubiquitin-protein ligase XBOS32 (XBOS32) (Oryza sativa subsp. japonica (Rice)).